Here is a 574-residue protein sequence, read N- to C-terminus: Sulfate adenylyltransferase (574 aa).

The tract at residues 1–170 (MANPPHGGVL…VEAIDRLEHY (170 aa)) is N-terminal. A catalytic region spans residues 171–395 (DYVGLRYTPA…LRESHPPRNQ (225 aa)). Residue glutamine 198 coordinates sulfate. Residues 198 to 201 (QTRN) and 292 to 295 (GRDH) each bind ATP. Catalysis depends on residues threonine 199, arginine 200, and asparagine 201. Residue arginine 200 coordinates sulfate. Residue alanine 296 participates in sulfate binding. An ATP-binding site is contributed by methionine 334. The segment at 396-574 (QGFTVFLTGY…LESQGLLTQL (179 aa)) is allosteric regulation domain; adenylyl-sulfate kinase-like. Residues 435–438 (ETVR), arginine 452, 478–479 (IA), and arginine 516 each bind 3'-phosphoadenylyl sulfate.

The protein in the N-terminal section; belongs to the sulfate adenylyltransferase family. This sequence in the C-terminal section; belongs to the APS kinase family. In terms of assembly, homohexamer. Dimer of trimers.

The protein resides in the cytoplasm. It carries out the reaction sulfate + ATP + H(+) = adenosine 5'-phosphosulfate + diphosphate. It functions in the pathway sulfur metabolism; hydrogen sulfide biosynthesis; sulfite from sulfate: step 1/3. Its activity is regulated as follows. Allosterically inhibited by 3'-phosphoadenosine 5'-phosphosulfate (PAPS). Functionally, catalyzes the first intracellular reaction of sulfate assimilation, forming adenosine-5'-phosphosulfate (APS) from inorganic sulfate and ATP. Plays an important role in sulfate activation as a component of the biosynthesis pathway of sulfur-containing amino acids. The protein is Sulfate adenylyltransferase of Phaeosphaeria nodorum (strain SN15 / ATCC MYA-4574 / FGSC 10173) (Glume blotch fungus).